Here is a 212-residue protein sequence, read N- to C-terminus: Uridine kinase (212 aa).

G13 to T20 is a binding site for ATP.

The protein belongs to the uridine kinase family.

The protein resides in the cytoplasm. The enzyme catalyses uridine + ATP = UMP + ADP + H(+). It catalyses the reaction cytidine + ATP = CMP + ADP + H(+). Its pathway is pyrimidine metabolism; CTP biosynthesis via salvage pathway; CTP from cytidine: step 1/3. It participates in pyrimidine metabolism; UMP biosynthesis via salvage pathway; UMP from uridine: step 1/1. In Bacillus thuringiensis (strain Al Hakam), this protein is Uridine kinase.